Reading from the N-terminus, the 80-residue chain is MDQRKSGGIPLHAVAKNVRCTSKDIKDYEIYKLLVSYGADINARVEFTGVGFSIYDGKTISEIVEFKIAFVGESEVITEE.

One copy of the ANK repeat lies at 6–46 (SGGIPLHAVAKNVRCTSKDIKDYEIYKLLVSYGADINARVE).

This is Putative ankyrin repeat protein RC0877 from Rickettsia conorii (strain ATCC VR-613 / Malish 7).